Here is a 116-residue protein sequence, read N- to C-terminus: Somatostatin (116 aa).

The N-terminal stretch at 1–24 is a signal peptide; the sequence is MLSCRLQCALAALSIVLALGGVTC. Residues 25-88 constitute a propeptide that is removed on maturation; that stretch reads APSDPRLRQF…QDEMRLELQR (64 aa). Ala43 is subject to Alanine amide. Residues 62-99 form a disordered region; sequence QTENDALEPEDLSQAAEQDEMRLELQRSANSNPAMAPR. A disulfide bridge connects residues Cys105 and Cys116.

The protein belongs to the somatostatin family. C-terminal amidation of the neuronostatin peptide is required for its biological activity, including for the regulation of mean arterial pressure.

The protein resides in the secreted. Functionally, inhibits the secretion of pituitary hormones, including that of growth hormone/somatotropin (GH1), PRL, ACTH, luteinizing hormone (LH) and TSH. Also impairs ghrelin- and GnRH-stimulated secretion of GH1 and LH; the inhibition of ghrelin-stimulated secretion of GH1 can be further increased by neuronostatin. May enhance low-glucose-induced glucagon release by pancreatic alpha cells. This effect may be mediated by binding to GPR107 and PKA activation. May regulate cardiac contractile function. May compromise cardiomyocyte viability. In the central nervous system, may impair memory retention and may affect hippocampal excitability. May also have anxiolytic and anorexigenic effects. May play a role in arterial pressure regulation. May inhibit basal, but not ghrelin- or GnRH-stimulated secretion of GH1 or LH, but does not affect the release of other pituitary hormones, including PRL, ACTH, FSH or TSH. Potentiates inhibitory action of somatostatin on ghrelin-stimulated secretion of GH1, but not that on GnRH-stimulated secretion of LH. The chain is Somatostatin (SST) from Canis lupus familiaris (Dog).